The primary structure comprises 364 residues: WAT1-related protein At5g47470 (364 aa).

10 consecutive transmembrane segments (helical) span residues 28–48 (MVIVGGLVMVQFVYAGNSLLM), 59–79 (FTIVIFSTFATFIILSPFAIL), 93–113 (LIGKLVLISFAGVTLFQSLFL), 124–144 (ATAMPNLAPGLIFFIAWIVGL), 158–178 (ILGTLLCVFGALAMSVMHSTS), 197–217 (VVGCIYLLGAVFVLSTNVVLQ), 228–248 (ISLSAITALLGVLITTVVLLL), 255–275 (VLASSLISFGNLVGYSVLAGA), 293–313 (PVFVSMFSPFATVISVAFAVL), and 319–339 (VSLGSVGGMVLMFVGLYLVLW). Residues 40-172 (VYAGNSLLMS…LCVFGALAMS (133 aa)) enclose the EamA 1 domain. Positions 219-338 (STLAEFPAPI…LMFVGLYLVL (120 aa)) constitute an EamA 2 domain.

This sequence belongs to the drug/metabolite transporter (DMT) superfamily. Plant drug/metabolite exporter (P-DME) (TC 2.A.7.4) family.

The protein resides in the membrane. The chain is WAT1-related protein At5g47470 from Arabidopsis thaliana (Mouse-ear cress).